The chain runs to 439 residues: MGVANDSSPEYQWMSPHRLSDTVILGDCLYFNNIMSQLDLHQNWAPSVRLLNYFKNFNKETLLKIEENDYINSSFFQQKDKRFYPINDDFYHISTGGYGIVFKIDNYVVKFVFEATKLYSPMETTAEFTVPKFLYNNLKGDEKKLIVCAWAMGLNYKLTFLHTLYKRVLHMLLLLIQTMDGQELSLRYSSKVFLKAFNERKDSIKFVKLLSHFYPAVINSNINVINYFNRMFHFFEHEKRTNYEYERGNIIIFPLALYSADKVDTELAIKLGFKSLVQYIKFIFLQMSLLYIKIYELPCCDNFLHADLKPDNILLFDSNEPIIIHLKNKKFVFNERIKSALNDFDFSQVAGIINKKIKNNFKVEHNWYYDFHFFVHTLLKTYPEIEKDIEFSTALEEFIMCTKTDCDKYRLKVSILHPISFLEKFIMRDIFSDWINGRN.

The 353-residue stretch at 87 to 439 (NDDFYHISTG…IFSDWINGRN (353 aa)) folds into the Protein kinase domain. ATP contacts are provided by residues 93–101 (ISTGGYGIV) and Lys117. The active-site Proton acceptor is Asp307.

It belongs to the protein kinase superfamily. Ser/Thr protein kinase family. In terms of processing, phosphorylated in vivo. Autophosphorylated in vitro.

It is found in the host endoplasmic reticulum. The protein localises to the host endoplasmic reticulum-Golgi intermediate compartment. It carries out the reaction L-seryl-[protein] + ATP = O-phospho-L-seryl-[protein] + ADP + H(+). The catalysed reaction is L-threonyl-[protein] + ATP = O-phospho-L-threonyl-[protein] + ADP + H(+). Essential serine-protein kinase involved in the early stage of virion morphogenesis. The chain is Serine/threonine-protein kinase 2 (OPG054) from Monkeypox virus.